The following is a 356-amino-acid chain: Chavicol O-methyltransferase (356 aa).

Residues glycine 202, aspartate 225, aspartate 245, methionine 246, and lysine 259 each contribute to the S-adenosyl-L-methionine site. The active-site Proton acceptor is histidine 263.

The protein belongs to the class I-like SAM-binding methyltransferase superfamily. Cation-independent O-methyltransferase family. COMT subfamily. In terms of assembly, homodimer. In terms of tissue distribution, specifically expressed in the peltate glandular trichomes on the surface of the young basil leaves.

The catalysed reaction is (E)-isoeugenol + S-adenosyl-L-methionine = (E)-isomethyleugenol + S-adenosyl-L-homocysteine + H(+). The protein operates within aromatic compound metabolism; phenylpropanoid biosynthesis. Phenylpropene O-methyltransferase that catalyzes the methylation of the para-4-hydroxyl of chavicol to methylchavicol. Can also convert eugenol to methyleugenol but with less affinity. In Ocimum basilicum (Sweet basil), this protein is Chavicol O-methyltransferase (CVOMT1).